The primary structure comprises 274 residues: Nitrogenase iron protein (274 aa).

An ATP-binding site is contributed by 8–15 (GKGGIGKS). C94 is a [4Fe-4S] cluster binding site. Position 97 is an ADP-ribosylarginine; by dinitrogenase reductase ADP-ribosyltransferase (R97). C131 is a [4Fe-4S] cluster binding site.

It belongs to the NifH/BchL/ChlL family. In terms of assembly, homodimer. It depends on [4Fe-4S] cluster as a cofactor. Post-translationally, the reversible ADP-ribosylation of Arg-97 inactivates the nitrogenase reductase and regulates nitrogenase activity.

The enzyme catalyses N2 + 8 reduced [2Fe-2S]-[ferredoxin] + 16 ATP + 16 H2O = H2 + 8 oxidized [2Fe-2S]-[ferredoxin] + 2 NH4(+) + 16 ADP + 16 phosphate + 6 H(+). Its function is as follows. The key enzymatic reactions in nitrogen fixation are catalyzed by the nitrogenase complex, which has 2 components: the iron protein and the molybdenum-iron protein. This chain is Nitrogenase iron protein, found in Chlorobium phaeovibrioides (strain DSM 265 / 1930) (Prosthecochloris vibrioformis (strain DSM 265)).